The sequence spans 242 residues: Venom nerve growth factor (242 aa).

Residues 1–18 (MSMMCYTLIIAFLIGIWA) form the signal peptide. Positions 19–125 (APKSEDNVPL…TLNRNIRAKR (107 aa)) are excised as a propeptide. Residues 47–66 (GLKTSRNTDQRHPAPKKAED) show a composition bias toward basic and acidic residues. The tract at residues 47-70 (GLKTSRNTDQRHPAPKKAEDQELG) is disordered. 3 disulfides stabilise this stretch: Cys-139–Cys-203, Cys-181–Cys-231, and Cys-191–Cys-233. A glycan (N-linked (GlcNAc...) asparagine) is linked at Asn-166.

Belongs to the NGF-beta family. In terms of assembly, homodimer; non-covalently linked. In terms of tissue distribution, expressed by the venom gland.

The protein localises to the secreted. In terms of biological role, nerve growth factor is important for the development and maintenance of the sympathetic and sensory nervous systems. It stimulates division and differentiation of sympathetic and embryonic sensory neurons as well as basal forebrain cholinergic neurons in the brain. Its relevance in the snake venom is not clear. However, it has been shown to inhibit metalloproteinase-dependent proteolysis of platelet glycoprotein Ib alpha, suggesting a metalloproteinase inhibition to prevent metalloprotease autodigestion and/or protection against prey proteases. Binds a lipid between the two protein chains in the homodimer. The lipid-bound form promotes histamine relase from mouse mast cells, contrary to the lipid-free form. This is Venom nerve growth factor from Drysdalia coronoides (White-lipped snake).